The primary structure comprises 353 residues: Phosphate acyltransferase (353 aa).

The protein belongs to the PlsX family. Homodimer. Probably interacts with PlsY.

It is found in the cytoplasm. The enzyme catalyses a fatty acyl-[ACP] + phosphate = an acyl phosphate + holo-[ACP]. It participates in lipid metabolism; phospholipid metabolism. In terms of biological role, catalyzes the reversible formation of acyl-phosphate (acyl-PO(4)) from acyl-[acyl-carrier-protein] (acyl-ACP). This enzyme utilizes acyl-ACP as fatty acyl donor, but not acyl-CoA. In Bradyrhizobium diazoefficiens (strain JCM 10833 / BCRC 13528 / IAM 13628 / NBRC 14792 / USDA 110), this protein is Phosphate acyltransferase.